The sequence spans 139 residues: Orientotoxin-2 (139 aa).

Expressed by the venom gland.

It is found in the secreted. It catalyses the reaction a 1,2-diacyl-sn-glycero-3-phosphocholine + H2O = a 1-acyl-sn-glycero-3-phosphocholine + a fatty acid + H(+). In terms of biological role, has a highly toxic phospholipase A2 activity. This Vespa orientalis (Oriental hornet) protein is Orientotoxin-2.